A 383-amino-acid polypeptide reads, in one-letter code: Ceramide synthase 3 (383 aa).

A helical transmembrane segment spans residues 32–52; it reads VFVKPSHLYVTIPYAFLLLII. The homeobox-like stretch occupies residues 66–127; it reads KSFGIKETVR…RSRRNQERPS (62 aa). Positions 130–331 constitute a TLC domain; that stretch reads KKFQEACWRF…ILKMLNRCIF (202 aa). Transmembrane regions (helical) follow at residues 139-159, 174-194, 205-225, 264-284, and 298-318; these read FAFYLMITVAGIAFLYDKPWL, LLPSQYWYYILEMSFYWSLLF, FLAHIIHHLAAISLMSFSWCA, FFIFSTIFFISRLIVFPFWIL, and FFSYIFLNLQLMILQVLHLYW. Topologically, residues 319 to 383 are cytoplasmic; that stretch reads GYYILKMLNR…HLIPNGQHGH (65 aa). Ser340 carries the phosphoserine modification. Positions 342–355 are enriched in acidic residues; that stretch reads DEDYEEEEEEEEEE. Residues 342–363 are disordered; it reads DEDYEEEEEEEEEEATKGKEMD.

As to expression, expressed in the epidermis, where it localizes at the interface between the stratum granulosum and the stratum corneum (at protein level).

The protein localises to the endoplasmic reticulum membrane. The catalysed reaction is a very long-chain fatty acyl-CoA + a sphingoid base = an N-(very-long-chain fatty acyl)-sphingoid base + CoA + H(+). It catalyses the reaction docosanoyl-CoA + sphinganine = N-docosanoylsphinganine + CoA + H(+). It carries out the reaction tetracosanoyl-CoA + sphinganine = N-tetracosanoylsphinganine + CoA + H(+). The enzyme catalyses hexacosanoyl-CoA + sphinganine = N-hexacosanoylsphinganine + CoA + H(+). The catalysed reaction is 2-hydroxydocosanoyl-CoA + sphinganine = N-(2-hydroxydocosanoyl)-sphinganine + CoA + H(+). It catalyses the reaction 2-hydroxytetracosanoyl-CoA + sphinganine = N-(2-hydroxytetracosanoyl)-sphinganine + CoA + H(+). It carries out the reaction an ultra-long-chain fatty acyl-CoA + a sphingoid base = an N-(ultra-long-chain-acyl)-sphingoid base + CoA + H(+). The enzyme catalyses octacosanoyl-CoA + sphinganine = N-(octacosanoyl)-sphinganine + CoA + H(+). The catalysed reaction is a fatty acyl-CoA + sphing-4-enine = an N-acylsphing-4-enine + CoA + H(+). It catalyses the reaction sphinganine + octadecanoyl-CoA = N-(octadecanoyl)-sphinganine + CoA + H(+). It carries out the reaction 2-hydroxyoctadecanoyl-CoA + sphinganine = N-(2-hydroxyoctadecanoyl)-sphinganine + CoA + H(+). Its pathway is lipid metabolism; sphingolipid metabolism. In terms of biological role, ceramide synthase that catalyzes the transfer of the acyl chain from acyl-CoA to a sphingoid base, with high selectivity toward very- and ultra-long-chain fatty acyl-CoA (chain length greater than C22). N-acylates sphinganine and sphingosine bases to form dihydroceramides and ceramides in de novo synthesis and salvage pathways, respectively. It is crucial for the synthesis of ultra-long-chain ceramides in the epidermis, to maintain epidermal lipid homeostasis and terminal differentiation. The chain is Ceramide synthase 3 from Homo sapiens (Human).